Here is a 475-residue protein sequence, read N- to C-terminus: Glutamyl-tRNA(Gln) amidotransferase subunit A (475 aa).

Active-site charge relay system residues include K69 and S144. S168 functions as the Acyl-ester intermediate in the catalytic mechanism.

The protein belongs to the amidase family. GatA subfamily. As to quaternary structure, heterotrimer of A, B and C subunits.

The enzyme catalyses L-glutamyl-tRNA(Gln) + L-glutamine + ATP + H2O = L-glutaminyl-tRNA(Gln) + L-glutamate + ADP + phosphate + H(+). Its function is as follows. Allows the formation of correctly charged Gln-tRNA(Gln) through the transamidation of misacylated Glu-tRNA(Gln) in organisms which lack glutaminyl-tRNA synthetase. The reaction takes place in the presence of glutamine and ATP through an activated gamma-phospho-Glu-tRNA(Gln). The protein is Glutamyl-tRNA(Gln) amidotransferase subunit A of Methanococcoides burtonii (strain DSM 6242 / NBRC 107633 / OCM 468 / ACE-M).